The sequence spans 404 residues: Glutamyl-tRNA reductase (404 aa).

Residues 47 to 50 (TCNR), S94, 99 to 101 (EQE), and Q105 contribute to the substrate site. The active-site Nucleophile is C48. Residue 174–179 (GAGEMG) participates in NADP(+) binding.

As to quaternary structure, homotetramer.

The catalysed reaction is (S)-4-amino-5-oxopentanoate + tRNA(Glu) + NADP(+) = L-glutamyl-tRNA(Glu) + NADPH + H(+). Its pathway is porphyrin-containing compound metabolism; protoporphyrin-IX biosynthesis; 5-aminolevulinate from L-glutamyl-tRNA(Glu): step 1/2. Inhibited by heavy metal compounds, Zn(2+), and heme. Also competitively inhibited by glutamycin. Catalyzes the NADPH-dependent reduction of glutamyl-tRNA(Glu) to glutamate 1-semialdehyde (GSA). In the absence of NADPH, exhibits substrate esterase activity, leading to the release of glutamate from tRNA. This is Glutamyl-tRNA reductase (hemA) from Methanopyrus kandleri (strain AV19 / DSM 6324 / JCM 9639 / NBRC 100938).